The chain runs to 531 residues: Polyamine aminopropyltransferase 1 (531 aa).

7 helical membrane-spanning segments follow: residues 27–47 (FLLL…ELAL), 59–79 (VLQT…GSLA), 96–116 (GVLA…FAWL), 122–142 (AMIV…PLLM), 160–180 (MFAV…LFLL), 188–208 (GALV…VFIF), and 218–238 (AGLL…YVLA). Residues 205 to 476 (VFIFRRQTGR…VLARPGTEAP (272 aa)) form a spermidine synthase region. The PABS domain occupies 233–471 (TTYVLADDLE…GNWGFVLARP (239 aa)). Gln263 serves as a coordination point for S-methyl-5'-thioadenosine. His298 and Asp320 together coordinate spermidine. Residues Glu340 and 374–375 (DA) each bind S-methyl-5'-thioadenosine. The Proton acceptor role is filled by Asp392.

Belongs to the spermidine/spermine synthase family. Homodimer or homotetramer.

It is found in the cell membrane. It catalyses the reaction S-adenosyl 3-(methylsulfanyl)propylamine + putrescine = S-methyl-5'-thioadenosine + spermidine + H(+). It functions in the pathway amine and polyamine biosynthesis; spermidine biosynthesis; spermidine from putrescine: step 1/1. In terms of biological role, catalyzes the irreversible transfer of a propylamine group from the amino donor S-adenosylmethioninamine (decarboxy-AdoMet) to putrescine (1,4-diaminobutane) to yield spermidine. This Streptomyces coelicolor (strain ATCC BAA-471 / A3(2) / M145) protein is Polyamine aminopropyltransferase 1.